Consider the following 343-residue polypeptide: Probable magnesium transporter NIPA4 (343 aa).

The Extracellular portion of the chain corresponds to 1–18 (MAESSGSWRDSYKGMSSD). A helical transmembrane segment spans residues 19-39 (NIKGLVLALSSSLFIGASFIV). Over 40-66 (KKKGLKKAASTGTRAGVGGYSYLYEPL) the chain is Cytoplasmic. Residues 67 to 87 (WWIGMTTMLLGEIANFAAYAF) traverse the membrane as a helical segment. The Extracellular portion of the chain corresponds to 88 to 90 (APA). A helical transmembrane segment spans residues 91–111 (ILVTPLGAVSIIISAVLAHII). The Cytoplasmic portion of the chain corresponds to 112-115 (LREK). The helical transmembrane segment at 116-136 (LHIFGILGCALCVVGSTTIVL) threads the bilayer. The Extracellular segment spans residues 137–157 (HAPQEREIDSVIEVWNLATEP). The helical transmembrane segment at 158-178 (AFMFYASLVIGAAVFLIIRFV) threads the bilayer. The Cytoplasmic segment spans residues 179–189 (PQYGQTNVMVY). The chain crosses the membrane as a helical span at residues 190–210 (IGICSLVGSLSVMSVKALGIA). At 211-220 (LKLTFSGTNQ) the chain is on the extracellular side. A helical membrane pass occupies residues 221–241 (LFYPQTWIFTLVVLTCVVTQL). At 242–254 (NYLNKALDTFNTA) the chain is on the cytoplasmic side. Residues 255–275 (IVSPIYYVMFTSLTILASVIM) form a helical membrane-spanning segment. The Extracellular portion of the chain corresponds to 276 to 283 (FKDWDRQN). Residues 284–304 (GTQIVTEICGFVTILSGTFLL) form a helical membrane-spanning segment. Topologically, residues 305–343 (HRTKDMVEGSSVILPLRISKHINEEEGIPLRRQESLRSP) are cytoplasmic.

This sequence belongs to the NIPA (TC 2.A.7) family. Homodimer.

The protein resides in the cell membrane. It localises to the early endosome. Its function is as follows. Acts as a Mg(2+) transporter. Can also transport other divalent cations such as Fe(2+), Sr(2+), Ba(2+), Mn(2+) and Co(2+) but to a much less extent than Mg(2+). The sequence is that of Probable magnesium transporter NIPA4 from Arabidopsis thaliana (Mouse-ear cress).